Reading from the N-terminus, the 356-residue chain is Alpha-N-acetylneuraminide alpha-2,8-sialyltransferase (356 aa).

The Cytoplasmic segment spans residues 1–29; sequence MSPCGRARRHTSRGAMAVLAWKFPRTRLP. A helical; Signal-anchor for type II membrane protein transmembrane segment spans residues 30 to 48; it reads VGASALCVVVLCWLYVFPV. The Lumenal segment spans residues 49–356; that stretch reads YRLPDEKEIV…CEDNSLQPTS (308 aa). N-linked (GlcNAc...) asparagine glycosylation is found at N71 and N119. Cysteines 138 and 287 form a disulfide. 2 residues coordinate CMP-N-acetyl-beta-neuraminate: N143 and N166. 2 N-linked (GlcNAc...) asparagine glycosylation sites follow: N214 and N245. Residues S274, T275, G276, W296, and H310 each coordinate CMP-N-acetyl-beta-neuraminate.

It belongs to the glycosyltransferase 29 family.

It is found in the golgi apparatus membrane. The enzyme catalyses an N-acetyl-alpha-neuraminyl-(2-&gt;3)-beta-D-galactosyl derivative + CMP-N-acetyl-beta-neuraminate = an N-acetyl-alpha-neuraminyl-(2-&gt;8)-N-acetyl-alpha-neuraminyl-(2-&gt;3)-beta-D-galactosyl derivative + CMP + H(+). It catalyses the reaction a ganglioside GM3 (d18:1(4E)) + CMP-N-acetyl-beta-neuraminate = a ganglioside GD3 (d18:1(4E)) + CMP + H(+). The catalysed reaction is a ganglioside GD3 (d18:1(4E)) + CMP-N-acetyl-beta-neuraminate = a ganglioside GT3 (d18:1(4E)) + CMP + H(+). It carries out the reaction a ganglioside GD1a (d18:1(4E)) + CMP-N-acetyl-beta-neuraminate = a ganglioside GT1a (d18:1(4E)) + CMP + H(+). The enzyme catalyses a ganglioside GT1b (d18:1(4E)) + CMP-N-acetyl-beta-neuraminate = a ganglioside GQ1b (d18:1(4E)) + CMP + H(+). It catalyses the reaction a ganglioside GM1b (d18:1(4E)) + CMP-N-acetyl-beta-neuraminate = a ganglioside GD1c (d18:1(4E)) + CMP + H(+). The catalysed reaction is a ganglioside GD3 + CMP-N-acetyl-beta-neuraminate = a ganglioside GT3 + CMP + H(+). It carries out the reaction [alpha-N-acetylneuraminyl-(2-&gt;8)](n)-alpha-N-acetylneuraminyl-(2-&gt;8)-alpha-N-acetylneuraminyl-(2-&gt;3)-beta-D-galactosyl-(1-&gt;4)-beta-D-glucosyl-(1&lt;-&gt;1)-ceramide + CMP-N-acetyl-beta-neuraminate = [alpha-N-acetylneuraminyl-(2-&gt;8)](n+1)-alpha-N-acetylneuraminyl-(2-&gt;8)-alpha-N-acetylneuraminyl-(2-&gt;3)-beta-D-galactosyl-(1-&gt;4)-beta-D-glucosyl-(1&lt;-&gt;1)-ceramide + CMP + H(+). It participates in protein modification; protein glycosylation. Its pathway is lipid metabolism; sphingolipid metabolism. In terms of biological role, catalyzes the addition of sialic acid in alpha 2,8-linkage to the sialic acid moiety of the ganglioside GM3 to form ganglioside GD3; gangliosides are a subfamily of complex glycosphingolipds that contain one or more residues of sialic acid. Can catalyze the addition of a second alpha-2,8- sialic acid to GD3 to form GT3. Can use GM1b, GD1a and GT1b as acceptor substrates to synthesize GD1c, GT1a and GQ1b respectively. The polypeptide is Alpha-N-acetylneuraminide alpha-2,8-sialyltransferase (Bos taurus (Bovine)).